A 408-amino-acid polypeptide reads, in one-letter code: LL-diaminopimelate aminotransferase (408 aa).

Substrate-binding residues include Tyr-15 and Gly-42. Residues Tyr-72, 108–109 (SK), Tyr-132, Asn-187, Tyr-218, and 246–248 (SFS) contribute to the pyridoxal 5'-phosphate site. Substrate is bound by residues Lys-109, Tyr-132, and Asn-187. Lys-249 bears the N6-(pyridoxal phosphate)lysine mark. Pyridoxal 5'-phosphate is bound by residues Arg-257 and Asn-292. Substrate is bound by residues Asn-292 and Arg-388.

Belongs to the class-I pyridoxal-phosphate-dependent aminotransferase family. LL-diaminopimelate aminotransferase subfamily. Homodimer. The cofactor is pyridoxal 5'-phosphate.

The enzyme catalyses (2S,6S)-2,6-diaminopimelate + 2-oxoglutarate = (S)-2,3,4,5-tetrahydrodipicolinate + L-glutamate + H2O + H(+). It functions in the pathway amino-acid biosynthesis; L-lysine biosynthesis via DAP pathway; LL-2,6-diaminopimelate from (S)-tetrahydrodipicolinate (aminotransferase route): step 1/1. Functionally, involved in the synthesis of meso-diaminopimelate (m-DAP or DL-DAP), required for both lysine and peptidoglycan biosynthesis. Catalyzes the direct conversion of tetrahydrodipicolinate to LL-diaminopimelate. This Synechococcus sp. (strain RCC307) protein is LL-diaminopimelate aminotransferase.